The sequence spans 244 residues: Probable transcriptional regulatory protein DNO_1179 (244 aa).

Belongs to the TACO1 family.

It is found in the cytoplasm. This Dichelobacter nodosus (strain VCS1703A) protein is Probable transcriptional regulatory protein DNO_1179.